A 682-amino-acid chain; its full sequence is DNA-directed RNA polymerase subunit beta' (682 aa).

The Zn(2+) site is built by cysteine 69, cysteine 71, cysteine 87, and cysteine 90. Residues aspartate 489, aspartate 491, and aspartate 493 each contribute to the Mg(2+) site.

This sequence belongs to the RNA polymerase beta' chain family. RpoC1 subfamily. In terms of assembly, in plastids the minimal PEP RNA polymerase catalytic core is composed of four subunits: alpha, beta, beta', and beta''. When a (nuclear-encoded) sigma factor is associated with the core the holoenzyme is formed, which can initiate transcription. Mg(2+) is required as a cofactor. Zn(2+) serves as cofactor.

It is found in the plastid. Its subcellular location is the chloroplast. It carries out the reaction RNA(n) + a ribonucleoside 5'-triphosphate = RNA(n+1) + diphosphate. In terms of biological role, DNA-dependent RNA polymerase catalyzes the transcription of DNA into RNA using the four ribonucleoside triphosphates as substrates. In Acorus calamus var. americanus (American sweet flag), this protein is DNA-directed RNA polymerase subunit beta'.